Consider the following 171-residue polypeptide: Macro domain-containing protein RSc0334 (171 aa).

The region spanning 1 to 171 (MPIPTVTLRA…LYETALNEAR (171 aa)) is the Macro domain.

Belongs to the MacroD-type family.

This Ralstonia nicotianae (strain ATCC BAA-1114 / GMI1000) (Ralstonia solanacearum) protein is Macro domain-containing protein RSc0334.